Here is a 514-residue protein sequence, read N- to C-terminus: Serine/threonine-protein kinase 33 (514 aa).

Basic and acidic residues predominate over residues 65–86; the sequence is INRDITSRKDLPSRTSNVERKA. The tract at residues 65–91 is disordered; that stretch reads INRDITSRKDLPSRTSNVERKASQQQW. The region spanning 116–381 is the Protein kinase domain; that stretch reads YTFGRILGKG…AKELLDNQWL (266 aa). ATP is bound by residues 122–130 and Lys-145; that span reads LGKGSFGIV. The active-site Proton acceptor is the Asp-238. 2 disordered regions span residues 402 to 468 and 485 to 514; these read KNNP…DMCS and MEKT…KKKL. The residue at position 407 (Ser-407) is a Phosphoserine. Positions 413–426 are enriched in basic and acidic residues; it reads TEEKNKPSTEEKLK. The segment covering 449–468 has biased composition (polar residues); sequence STAYEKQFPATSKDNFDMCS.

The protein belongs to the protein kinase superfamily. CAMK Ser/Thr protein kinase family. CaMK subfamily. Homodimer. Post-translationally, autophosphorylated. Highly expressed in testis, fetal lung and heart, followed by pituitary gland, kidney, interventricular septum, pancreas, heart, trachea, thyroid gland and uterus. Weak hybridization signals were observed in the following tissues: amygdala, aorta, esophagus, colon ascending, colon transverse, skeletal muscle, spleen, peripheral blood leukocyte, lymph node, bone marrow, placenta, prostate, liver, salivary gland, mammary gland, some tumor cell lines, fetal brain, fetal liver, fetal spleen and fetal thymus. No signal at all was detectable in RNA from tissues of the nervous system.

The protein localises to the cytoplasm. The protein resides in the cytoskeleton. It is found in the perinuclear region. The enzyme catalyses L-seryl-[protein] + ATP = O-phospho-L-seryl-[protein] + ADP + H(+). It catalyses the reaction L-threonyl-[protein] + ATP = O-phospho-L-threonyl-[protein] + ADP + H(+). With respect to regulation, specifically inhibited by CDD-2807 ((3-([1,1'-Biphenyl]-2-ylethynyl)-1H-indazol-5-yl)(2,6-diazaspiro[3.5]nonan-2-yl)methanone). Its function is as follows. Serine/threonine protein kinase required for spermatid differentiation and male fertility. Promotes sperm flagella assembly during spermatogenesis by mediating phosphorylation of fibrous sheath proteins AKAP3 and AKAP4. Also phosphorylates vimentin/VIM, thereby regulating the dynamic behavior of the intermediate filament cytoskeleton. This Homo sapiens (Human) protein is Serine/threonine-protein kinase 33.